The following is a 246-amino-acid chain: NH(3)-dependent NAD(+) synthetase (246 aa).

29–36 (GLSGGIDS) lines the ATP pocket. Asp-35 contributes to the Mg(2+) binding site. Arg-110 is a deamido-NAD(+) binding site. Thr-130 contributes to the ATP binding site. Glu-135 contributes to the Mg(2+) binding site. Lys-159 and Ser-181 together coordinate ATP.

Belongs to the NAD synthetase family. In terms of assembly, homodimer.

The catalysed reaction is deamido-NAD(+) + NH4(+) + ATP = AMP + diphosphate + NAD(+) + H(+). It functions in the pathway cofactor biosynthesis; NAD(+) biosynthesis; NAD(+) from deamido-NAD(+) (ammonia route): step 1/1. Catalyzes the ATP-dependent amidation of deamido-NAD to form NAD. Uses ammonia as a nitrogen source. This Campylobacter jejuni subsp. doylei (strain ATCC BAA-1458 / RM4099 / 269.97) protein is NH(3)-dependent NAD(+) synthetase.